The primary structure comprises 98 residues: Large ribosomal subunit protein uL23 (98 aa).

The protein belongs to the universal ribosomal protein uL23 family. In terms of assembly, part of the 50S ribosomal subunit. Contacts protein L29, and trigger factor when it is bound to the ribosome.

One of the early assembly proteins it binds 23S rRNA. One of the proteins that surrounds the polypeptide exit tunnel on the outside of the ribosome. Forms the main docking site for trigger factor binding to the ribosome. The protein is Large ribosomal subunit protein uL23 of Streptococcus pyogenes serotype M1.